The chain runs to 391 residues: MQFVDEATIDVHAGKGGDGCLSFRREKYVEFGGPDGGDGGAGGHVFVQADTNINTLVDYRYDRIFKARNGEPGKGRQMTGKSAEDIILYVPVGTTVVDLDTDEVLADLTDTDKPVMVAQAGRGGLGNIHFKSSVNQAPRKTTKGKPGESRRLRLELKVLADVGLLGMPNAGKSTLIRAISAAKPKVADYPFTTLIPNLGVVKADRYRSFVVADIPGLIEGAAEGAGLGIRFLKHLARTRLLLHVVDLAPMDGSSPANHIDAIADELDRFSPALAEQERWLVFNKIDLLADDEAQAQVDAIVDELGWQGPVFKVSAAAGVGCEDLVYALMNAIEDRRLLEREDPAYAAAQQDLRARLEEEARERVQELKAEARQARQNDDDDDHDVEVVYEP.

Residues 1-159 enclose the Obg domain; that stretch reads MQFVDEATID…RRLRLELKVL (159 aa). In terms of domain architecture, OBG-type G spans 160–333; the sequence is ADVGLLGMPN…LVYALMNAIE (174 aa). GTP contacts are provided by residues 166–173, 191–195, 213–216, 283–286, and 314–316; these read GMPNAGKS, FTTLI, DIPG, NKID, and SAA. Residues Ser173 and Thr193 each contribute to the Mg(2+) site. The span at 367–377 shows a compositional bias: basic and acidic residues; that stretch reads LKAEARQARQN. Residues 367-391 are disordered; sequence LKAEARQARQNDDDDDHDVEVVYEP. The segment covering 378-391 has biased composition (acidic residues); sequence DDDDDHDVEVVYEP.

This sequence belongs to the TRAFAC class OBG-HflX-like GTPase superfamily. OBG GTPase family. Monomer. Mg(2+) serves as cofactor.

The protein localises to the cytoplasm. In terms of biological role, an essential GTPase which binds GTP, GDP and possibly (p)ppGpp with moderate affinity, with high nucleotide exchange rates and a fairly low GTP hydrolysis rate. Plays a role in control of the cell cycle, stress response, ribosome biogenesis and in those bacteria that undergo differentiation, in morphogenesis control. This is GTPase Obg from Alcanivorax borkumensis (strain ATCC 700651 / DSM 11573 / NCIMB 13689 / SK2).